The following is a 122-amino-acid chain: Large ribosomal subunit protein bL12 (122 aa).

It belongs to the bacterial ribosomal protein bL12 family. As to quaternary structure, homodimer. Part of the ribosomal stalk of the 50S ribosomal subunit. Forms a multimeric L10(L12)X complex, where L10 forms an elongated spine to which 2 to 4 L12 dimers bind in a sequential fashion. Binds GTP-bound translation factors.

Its function is as follows. Forms part of the ribosomal stalk which helps the ribosome interact with GTP-bound translation factors. Is thus essential for accurate translation. The sequence is that of Large ribosomal subunit protein bL12 from Levilactobacillus brevis (strain ATCC 367 / BCRC 12310 / CIP 105137 / JCM 1170 / LMG 11437 / NCIMB 947 / NCTC 947) (Lactobacillus brevis).